The following is a 503-amino-acid chain: Annexin A11 (503 aa).

Composition is skewed to pro residues over residues 80-117 (GYPP…PGMP) and 123-167 (PGAP…PVPS). The segment at 80–172 (GYPPVPPGGF…QPVPSYPGYS (93 aa)) is disordered. Annexin repeat units follow at residues 198 to 269 (FDPL…ALMK), 270 to 341 (TPVL…SLSQ), 353 to 425 (SLVQ…AVVK), and 429 to 500 (NTPA…KICG). N6-acetyllysine is present on residues lysine 246 and lysine 253. Lysine 477 carries the post-translational modification N6-acetyllysine.

This sequence belongs to the annexin family. In terms of assembly, interacts with S100A6. Interacts with PDCD6 in a calcium-dependent manner. Interacts with KIF23 during cytokinesis.

The protein resides in the cytoplasm. It is found in the melanosome. It localises to the nucleus envelope. The protein localises to the nucleus. Its subcellular location is the nucleoplasm. The protein resides in the cytoskeleton. It is found in the spindle. Required for midbody formation and completion of the terminal phase of cytokinesis. Binds specifically to calcyclin in a calcium-dependent manner. The sequence is that of Annexin A11 (Anxa11) from Mus musculus (Mouse).